The primary structure comprises 199 residues: Recombination protein RecR (199 aa).

Residues 58-73 (CSVCGNLTDTDVCPLC) form a C4-type zinc finger. Residues 81–176 (SVICVVEDPR…KTTRIAHGIP (96 aa)) enclose the Toprim domain.

The protein belongs to the RecR family.

Its function is as follows. May play a role in DNA repair. It seems to be involved in an RecBC-independent recombinational process of DNA repair. It may act with RecF and RecO. The polypeptide is Recombination protein RecR (Acetivibrio thermocellus (strain ATCC 27405 / DSM 1237 / JCM 9322 / NBRC 103400 / NCIMB 10682 / NRRL B-4536 / VPI 7372) (Clostridium thermocellum)).